We begin with the raw amino-acid sequence, 186 residues long: Small ribosomal subunit protein uS4 (186 aa).

In terms of domain architecture, S4 RNA-binding spans 106–170 (RRLQTIVYRK…SPLKDEDHPI (65 aa)). A disordered region spans residues 151–186 (EEEEVDYSPYSPLKDEDHPIRCEARGESPEETAAEE). The span at 163-178 (LKDEDHPIRCEARGES) shows a compositional bias: basic and acidic residues.

It belongs to the universal ribosomal protein uS4 family. As to quaternary structure, part of the 30S ribosomal subunit. Contacts protein S5. The interaction surface between S4 and S5 is involved in control of translational fidelity.

Its function is as follows. One of the primary rRNA binding proteins, it binds directly to 16S rRNA where it nucleates assembly of the body of the 30S subunit. With S5 and S12 plays an important role in translational accuracy. The chain is Small ribosomal subunit protein uS4 from Methanopyrus kandleri (strain AV19 / DSM 6324 / JCM 9639 / NBRC 100938).